The primary structure comprises 369 residues: MNTRPEQASKDTSGLTLQVALQRQDFRLEIDLELAGHGITALFGPSGSGKTTALRVLAGLEPAAQGRVCVQGDMWQDSAQGVFKPVHQRALGYVFQEASLFDHLNVQENLQYGFKRTPASERFRNWDHTLDLLGIAHLLKRWPHELSGGERQRVAIARALAASPRLLLLDEPMAALDAPRKAEILPYLERLQSRLEIPVIYVTHAIDEVARLADQLVLLEAGQVTAHGPTAELLTRLDLPLAHGDSAGAVLHCSVVSHDEADHLTLTRFAGIDLVVPRQNAAVGQTLRVRVAARDASLTLQRQTDTSILNILPASVLALSADGPGQVMVALEVGGSALLARITARSAHTLGLVPGLAVYAQIKGVAILG.

The 244-residue stretch at threonine 3–serine 246 folds into the ABC transporter domain. Glycine 44–threonine 51 is an ATP binding site. A Mop domain is found at aspartate 305–glycine 369.

This sequence belongs to the ABC transporter superfamily. Molybdate importer (TC 3.A.1.8) family. In terms of assembly, the complex is composed of two ATP-binding proteins (ModC), two transmembrane proteins (ModB) and a solute-binding protein (ModA).

It localises to the cell inner membrane. It carries out the reaction molybdate(out) + ATP + H2O = molybdate(in) + ADP + phosphate + H(+). Part of the ABC transporter complex ModABC involved in molybdenum import. Responsible for energy coupling to the transport system. This chain is Molybdenum import ATP-binding protein ModC, found in Albidiferax ferrireducens (strain ATCC BAA-621 / DSM 15236 / T118) (Rhodoferax ferrireducens).